A 582-amino-acid chain; its full sequence is Methionine--tRNA ligase (582 aa).

Positions 24–34 (PYIYAVPHLGN) match the 'HIGH' region motif. 4 residues coordinate Zn(2+): cysteine 156, cysteine 159, cysteine 169, and cysteine 172. The 'KMSKS' region signature appears at 346 to 350 (KFSKS). Lysine 349 lines the ATP pocket.

The protein belongs to the class-I aminoacyl-tRNA synthetase family. MetG type 1 subfamily. It depends on Zn(2+) as a cofactor.

Its subcellular location is the cytoplasm. It catalyses the reaction tRNA(Met) + L-methionine + ATP = L-methionyl-tRNA(Met) + AMP + diphosphate. Functionally, is required not only for elongation of protein synthesis but also for the initiation of all mRNA translation through initiator tRNA(fMet) aminoacylation. This chain is Methionine--tRNA ligase, found in Caldivirga maquilingensis (strain ATCC 700844 / DSM 13496 / JCM 10307 / IC-167).